A 286-amino-acid polypeptide reads, in one-letter code: MTKIAEKSKQEYGDLLKEKDHLQDMEQLEMTIVSIQTPYPSIVRIQGKINTLQPELWQAPNLAIRLIVSNPPEGQPISRVYTVRSFNPINAQIEIDFVKHEDLSPAMEWLNSAQVGTKIGLIGPRPHFIPNFTAKKHVVMFADDTAVPALYSILKQWELGISADIFIESFEKDIASQLPELEHVKIHSFHKEHHTSQKGLLLKAAFALEHYENITIWAACERNEARALRQFFLEDQQLNKNDVRIAGYWRDGVSSSELDKLRAQHYQEHIQQGKTLNEYDDLDLAN.

Residues 25-131 (MEQLEMTIVS…IGPRPHFIPN (107 aa)) enclose the FAD-binding FR-type domain. Residues arginine 79, valine 80, threonine 82, aspartate 96, valine 98, histidine 100, aspartate 102, serine 104, alanine 106, arginine 250, glycine 252, and serine 255 each contribute to the FAD site.

It belongs to the SIP oxidoreductase family. As to quaternary structure, monomer in solution. The cofactor is FAD.

The catalysed reaction is 2 a Fe(II)-siderophore + NAD(+) + H(+) = 2 a Fe(III)-siderophore + NADH. It catalyses the reaction 2 a Fe(II)-siderophore + NADP(+) + H(+) = 2 a Fe(III)-siderophore + NADPH. Functionally, ferric-siderophore reductase involved in iron removal from the siderophores after their transport into the cell. Interacts with the siderophores acinetobactin (Acb) and preacinetobactin (pre-Acb) and catalyzes the reduction of the ferric iron bound to the siderophores to ferrous iron, resulting in destabilization of the siderophore chelation complex and entrance of ferrous iron into the intracellular pool of bioavailable metals. Can use NADH and NADPH as electron donors in vitro, but the reduction rate is very slow, suggesting that NADH and NADPH are not the physiological partners of BauF. In Acinetobacter baumannii, this protein is Ferric acinetobactin reductase.